A 214-amino-acid polypeptide reads, in one-letter code: Holliday junction branch migration complex subunit RuvA (214 aa).

The tract at residues 1–63 is domain I; the sequence is MISSLRGTVL…EDSLTLFGFP (63 aa). The tract at residues 64 to 139 is domain II; the sequence is GPDELRAFEL…KLFVTQPRAR (76 aa). Residues 139–143 are flexible linker; sequence RSATS. Residues 144 to 214 form a domain III region; it reads AASTVTADVV…AAPTGQAADR (71 aa).

This sequence belongs to the RuvA family. As to quaternary structure, homotetramer. Forms an RuvA(8)-RuvB(12)-Holliday junction (HJ) complex. HJ DNA is sandwiched between 2 RuvA tetramers; dsDNA enters through RuvA and exits via RuvB. An RuvB hexamer assembles on each DNA strand where it exits the tetramer. Each RuvB hexamer is contacted by two RuvA subunits (via domain III) on 2 adjacent RuvB subunits; this complex drives branch migration. In the full resolvosome a probable DNA-RuvA(4)-RuvB(12)-RuvC(2) complex forms which resolves the HJ.

The protein resides in the cytoplasm. In terms of biological role, the RuvA-RuvB-RuvC complex processes Holliday junction (HJ) DNA during genetic recombination and DNA repair, while the RuvA-RuvB complex plays an important role in the rescue of blocked DNA replication forks via replication fork reversal (RFR). RuvA specifically binds to HJ cruciform DNA, conferring on it an open structure. The RuvB hexamer acts as an ATP-dependent pump, pulling dsDNA into and through the RuvAB complex. HJ branch migration allows RuvC to scan DNA until it finds its consensus sequence, where it cleaves and resolves the cruciform DNA. The chain is Holliday junction branch migration complex subunit RuvA from Clavibacter michiganensis subsp. michiganensis (strain NCPPB 382).